The chain runs to 217 residues: MGRRPARCYRYCKNKPYIKSRYCRGVPDAKIRIFDLGRKKASTDEFPLCVHLISLEKEQLSSEAIEAGRISCNKYISKTGGKDSFHMRVRVHPWHVLRINKMLSCAGADRLQTGMRGAFGKPMGTVARVNIGQIIFSIRTRDNMLANVVEALRRSSYKFPGRQKIVVSKKWGFTAYNREAYQKLKADGRLMNDGANVKVITNHGTLAQYAKDIAAAN.

This sequence belongs to the universal ribosomal protein uL16 family. As to quaternary structure, component of the small ribosomal subunit. Mature ribosomes consist of a small (40S) and a large (60S) subunit. The 40S subunit contains about 33 different proteins and 1 molecule of RNA (18S). The 60S subunit contains about 49 different proteins and 3 molecules of RNA (25S, 5.8S and 5S).

In Dictyostelium discoideum (Social amoeba), this protein is Large ribosomal subunit protein uL16 (rpl10).